A 148-amino-acid polypeptide reads, in one-letter code: SsrA-binding protein (148 aa).

A disordered region spans residues 128–148 (ESIAKKDQERNLKREFKNNNR).

The protein belongs to the SmpB family.

It localises to the cytoplasm. Functionally, required for rescue of stalled ribosomes mediated by trans-translation. Binds to transfer-messenger RNA (tmRNA), required for stable association of tmRNA with ribosomes. tmRNA and SmpB together mimic tRNA shape, replacing the anticodon stem-loop with SmpB. tmRNA is encoded by the ssrA gene; the 2 termini fold to resemble tRNA(Ala) and it encodes a 'tag peptide', a short internal open reading frame. During trans-translation Ala-aminoacylated tmRNA acts like a tRNA, entering the A-site of stalled ribosomes, displacing the stalled mRNA. The ribosome then switches to translate the ORF on the tmRNA; the nascent peptide is terminated with the 'tag peptide' encoded by the tmRNA and targeted for degradation. The ribosome is freed to recommence translation, which seems to be the essential function of trans-translation. The sequence is that of SsrA-binding protein from Fusobacterium nucleatum subsp. nucleatum (strain ATCC 25586 / DSM 15643 / BCRC 10681 / CIP 101130 / JCM 8532 / KCTC 2640 / LMG 13131 / VPI 4355).